Reading from the N-terminus, the 667-residue chain is DNA ligase (667 aa).

NAD(+)-binding positions include 34–38 (DYEFD), 83–84 (SL), and E117. Residue K119 is the N6-AMP-lysine intermediate of the active site. NAD(+)-binding residues include R140, E176, K289, and K313. Residues C407, C410, C425, and C431 each coordinate Zn(2+). The BRCT domain maps to 591-667 (QVNRNFEGMS…ISEDEFMGMM (77 aa)).

The protein belongs to the NAD-dependent DNA ligase family. LigA subfamily. Mg(2+) is required as a cofactor. It depends on Mn(2+) as a cofactor.

The catalysed reaction is NAD(+) + (deoxyribonucleotide)n-3'-hydroxyl + 5'-phospho-(deoxyribonucleotide)m = (deoxyribonucleotide)n+m + AMP + beta-nicotinamide D-nucleotide.. Functionally, DNA ligase that catalyzes the formation of phosphodiester linkages between 5'-phosphoryl and 3'-hydroxyl groups in double-stranded DNA using NAD as a coenzyme and as the energy source for the reaction. It is essential for DNA replication and repair of damaged DNA. This chain is DNA ligase, found in Chlorobium chlorochromatii (strain CaD3).